The sequence spans 179 residues: Large ribosomal subunit protein uL6 (179 aa).

This sequence belongs to the universal ribosomal protein uL6 family. In terms of assembly, part of the 50S ribosomal subunit.

Its function is as follows. This protein binds to the 23S rRNA, and is important in its secondary structure. It is located near the subunit interface in the base of the L7/L12 stalk, and near the tRNA binding site of the peptidyltransferase center. In Clostridium perfringens (strain ATCC 13124 / DSM 756 / JCM 1290 / NCIMB 6125 / NCTC 8237 / Type A), this protein is Large ribosomal subunit protein uL6.